The primary structure comprises 76 residues: Omega-conotoxin-like TxO2 (76 aa).

The signal sequence occupies residues 1–22 (MKLTCVVIVAVLFLTAWTFVTA). A propeptide spanning residues 23–52 (APHSSNALENLYLKAHHEMNNPEDSELNKR) is cleaved from the precursor. Disulfide bonds link C53/C67, C60/C71, and C66/C75.

This sequence belongs to the conotoxin O1 superfamily. Expressed by the venom duct.

The protein localises to the secreted. Omega-conotoxins act at presynaptic membranes, they bind and block voltage-gated calcium channels (Cav). The protein is Omega-conotoxin-like TxO2 of Conus textile (Cloth-of-gold cone).